The primary structure comprises 133 residues: Small ribosomal subunit protein uS9 (133 aa).

It belongs to the universal ribosomal protein uS9 family.

The sequence is that of Small ribosomal subunit protein uS9 from Ureaplasma parvum serovar 3 (strain ATCC 700970).